A 176-amino-acid polypeptide reads, in one-letter code: Translation initiation factor IF-3 (176 aa).

This sequence belongs to the IF-3 family. Monomer.

The protein resides in the cytoplasm. Its function is as follows. IF-3 binds to the 30S ribosomal subunit and shifts the equilibrium between 70S ribosomes and their 50S and 30S subunits in favor of the free subunits, thus enhancing the availability of 30S subunits on which protein synthesis initiation begins. The polypeptide is Translation initiation factor IF-3 (Rippkaea orientalis (strain PCC 8801 / RF-1) (Cyanothece sp. (strain PCC 8801))).